Reading from the N-terminus, the 305-residue chain is Protein EXORDIUM-like 2 (305 aa).

The first 23 residues, 1-23 (MASNYRFAIFLTLFFATAGFSAA), serve as a signal peptide directing secretion. Residue asparagine 44 is glycosylated (N-linked (GlcNAc...) asparagine).

This sequence belongs to the EXORDIUM family.

Its subcellular location is the secreted. It is found in the extracellular space. The protein resides in the apoplast. Functionally, may play a role in a brassinosteroid-dependent regulation of growth and development. This chain is Protein EXORDIUM-like 2 (EXL2), found in Arabidopsis thaliana (Mouse-ear cress).